The following is a 577-amino-acid chain: Isocitrate dehydrogenase kinase/phosphatase (577 aa).

ATP is bound by residues 315–321 (APGIRGM) and K336. D371 is an active-site residue.

Belongs to the AceK family.

Its subcellular location is the cytoplasm. The catalysed reaction is L-seryl-[isocitrate dehydrogenase] + ATP = O-phospho-L-seryl-[isocitrate dehydrogenase] + ADP + H(+). Functionally, bifunctional enzyme which can phosphorylate or dephosphorylate isocitrate dehydrogenase (IDH) on a specific serine residue. This is a regulatory mechanism which enables bacteria to bypass the Krebs cycle via the glyoxylate shunt in response to the source of carbon. When bacteria are grown on glucose, IDH is fully active and unphosphorylated, but when grown on acetate or ethanol, the activity of IDH declines drastically concomitant with its phosphorylation. The sequence is that of Isocitrate dehydrogenase kinase/phosphatase from Escherichia fergusonii (strain ATCC 35469 / DSM 13698 / CCUG 18766 / IAM 14443 / JCM 21226 / LMG 7866 / NBRC 102419 / NCTC 12128 / CDC 0568-73).